The primary structure comprises 90 residues: Putative large ribosomal subunit protein uL23c (90 aa).

A coded by first part of gene region spans residues 1–46; that stretch reads MDGIKYAVFTDKSIQLLGKKQYTSNVESRSTRTEIKHWVELWNSYE. The interval 47–90 is coded by second part of gene; that stretch reads MNSHRLPGKGRRMGPIMGHTMHYRRMIITLQSSYSIPPLRKKRT.

Belongs to the universal ribosomal protein uL23 family. Part of the 50S ribosomal subunit.

The protein resides in the plastid. The protein localises to the chloroplast. In terms of biological role, binds to 23S rRNA. The sequence is that of Putative large ribosomal subunit protein uL23c (rpl23) from Spinacia oleracea (Spinach).